Consider the following 173-residue polypeptide: Crossover junction endodeoxyribonuclease RuvC (173 aa).

Residues Asp-8, Glu-67, and Asp-139 contribute to the active site. Mg(2+)-binding residues include Asp-8, Glu-67, and Asp-139.

The protein belongs to the RuvC family. Homodimer which binds Holliday junction (HJ) DNA. The HJ becomes 2-fold symmetrical on binding to RuvC with unstacked arms; it has a different conformation from HJ DNA in complex with RuvA. In the full resolvosome a probable DNA-RuvA(4)-RuvB(12)-RuvC(2) complex forms which resolves the HJ. The cofactor is Mg(2+).

Its subcellular location is the cytoplasm. The enzyme catalyses Endonucleolytic cleavage at a junction such as a reciprocal single-stranded crossover between two homologous DNA duplexes (Holliday junction).. In terms of biological role, the RuvA-RuvB-RuvC complex processes Holliday junction (HJ) DNA during genetic recombination and DNA repair. Endonuclease that resolves HJ intermediates. Cleaves cruciform DNA by making single-stranded nicks across the HJ at symmetrical positions within the homologous arms, yielding a 5'-phosphate and a 3'-hydroxyl group; requires a central core of homology in the junction. The consensus cleavage sequence is 5'-(A/T)TT(C/G)-3'. Cleavage occurs on the 3'-side of the TT dinucleotide at the point of strand exchange. HJ branch migration catalyzed by RuvA-RuvB allows RuvC to scan DNA until it finds its consensus sequence, where it cleaves and resolves the cruciform DNA. In Salmonella dublin (strain CT_02021853), this protein is Crossover junction endodeoxyribonuclease RuvC.